A 158-amino-acid polypeptide reads, in one-letter code: Chromobox protein homolog 7 (158 aa).

The region spanning 11–69 (FAVESIRKKRVRKGKVEYLVKWKGWPPKYSTWEPEEHILDPRLVMAYEEKEERDRASGY) is the Chromo domain. Residues 60–127 (KEERDRASGY…WTPTLPSSEV (68 aa)) form a disordered region. The span at 68 to 78 (GYRKRGPKPRR) shows a compositional bias: basic residues.

Component of a PRC1-like complex. Distinct PRC1-like core complexes are composed of a RING1 subunit (RING1B or RING1A), one of the six PCGF proteins (PCGF1-6), one PHC protein (PHC1-3) and one of the CBX proteins (CBX2, CBX4, CBX6, CBX7 or CBX8). The composition of the PRC1 complex may differ between the PRC1 complex in pluripotent embryonic stem cells containing RNF2, CBX7 and PCGF2, and the PRC1 complex in differentiating cells containing RNF2, CBX2, CBX4 and BMI1. Interacts with RING1. Interacts with RNF2, PHC1 and PCGF2. Interacts (via chromodomain) with histone H3K9Me3 and H3K27me3. Interacts with H3K9Me2 and H4K20Me1. Interacts (via chromodomain) with single-stranded and double-stranded RNA; RNA binding seems to be required for the localization to chromatin. Interacts with PCGF1, PCGF3, PCGF5 and PCGF6. Expressed in embryonic stem cells.

The protein resides in the nucleus. It is found in the chromosome. Functionally, component of a Polycomb group (PcG) multiprotein PRC1-like complex, a complex class required to maintain the transcriptionally repressive state of many genes, including Hox genes, throughout development. PcG PRC1 complex acts via chromatin remodeling and modification of histones; it mediates monoubiquitination of histone H2A 'Lys-119', rendering chromatin heritably changed in its expressibility. Promotes histone H3 trimethylation at 'Lys-9' (H3K9me3). Binds to histone H3 trimethylated at 'Lys-9' (H3K9me3) or at 'Lys-27' (H3K27me3). Trimethylation at 'Lys-27' (H3K27me3) is important for chromatin recruitment. May possibly also bind trimethylated lysine residues in other proteins (in vitro). Binds non-coding, single-stranded RNA and double-stranded RNA. Plays a role in the timely repression of differentiation-specific genes in pluripotent embryonic stem cells to maintain the undifferentiated state. Regulator of cellular lifespan by maintaining the repression of CDKN2A, but not by inducing telomerase activity. The polypeptide is Chromobox protein homolog 7 (Cbx7) (Mus musculus (Mouse)).